The primary structure comprises 137 residues: Acetyltransferase Atu2258 (137 aa).

The N-acetyltransferase domain occupies 1 to 137 (MNFVLSDVAD…QSITWLEKRF (137 aa)). Residues 66 to 68 (LFV), Gly-74, and 108 to 110 (RTY) each bind CoA.

Functionally, catalyzes the transfer of an acetyl group from acetyl coenzyme A (AcCoA) to an acceptor substrate and releases both CoA and the acetylated product. It prefers glucosamine 6-phosphate or dopamine. It can also use the thialysine, N(8)-acetylspermidine, chloramphenicol, puromycin, polymyxin B, and 4-aminobutyrate ethyl ester. In Agrobacterium fabrum (strain C58 / ATCC 33970) (Agrobacterium tumefaciens (strain C58)), this protein is Acetyltransferase Atu2258.